Reading from the N-terminus, the 355-residue chain is Tryptophan--tRNA ligase (355 aa).

Residues 13-15 (QPT) and 21-22 (GN) contribute to the ATP site. The short motif at 14 to 22 (PTGNLHLGN) is the 'HIGH' region element. An L-tryptophan-binding site is contributed by Asp137. ATP is bound by residues 149 to 151 (GED), Ile208, and 217 to 221 (KMSKS). The 'KMSKS' region signature appears at 217-221 (KMSKS).

The protein belongs to the class-I aminoacyl-tRNA synthetase family. As to quaternary structure, homodimer.

Its subcellular location is the cytoplasm. The enzyme catalyses tRNA(Trp) + L-tryptophan + ATP = L-tryptophyl-tRNA(Trp) + AMP + diphosphate + H(+). In terms of biological role, catalyzes the attachment of tryptophan to tRNA(Trp). The polypeptide is Tryptophan--tRNA ligase (Brucella melitensis biotype 1 (strain ATCC 23456 / CCUG 17765 / NCTC 10094 / 16M)).